Consider the following 184-residue polypeptide: NADH-quinone oxidoreductase subunit B (184 aa).

The [4Fe-4S] cluster site is built by cysteine 63, cysteine 64, cysteine 128, and cysteine 158.

It belongs to the complex I 20 kDa subunit family. As to quaternary structure, NDH-1 is composed of 14 different subunits. Subunits NuoB, C, D, E, F, and G constitute the peripheral sector of the complex. [4Fe-4S] cluster serves as cofactor.

The protein localises to the cell inner membrane. It carries out the reaction a quinone + NADH + 5 H(+)(in) = a quinol + NAD(+) + 4 H(+)(out). In terms of biological role, NDH-1 shuttles electrons from NADH, via FMN and iron-sulfur (Fe-S) centers, to quinones in the respiratory chain. The immediate electron acceptor for the enzyme in this species is believed to be ubiquinone. Couples the redox reaction to proton translocation (for every two electrons transferred, four hydrogen ions are translocated across the cytoplasmic membrane), and thus conserves the redox energy in a proton gradient. The sequence is that of NADH-quinone oxidoreductase subunit B from Xylella fastidiosa (strain M23).